The sequence spans 100 residues: Apolipoprotein C-II (100 aa).

The N-terminal stretch at 1–25 (MDARSLLLLWLLLPLLLLLGCEVQG) is a signal peptide. Positions 65 to 73 (AVDETIRDI) are lipid binding. Residues 77 to 100 (GSAAISTYTGILTDQILTMLQGKQ) form a lipoprotein lipase cofactor region.

Belongs to the apolipoprotein C2 family. In terms of processing, proapolipoprotein C-II is synthesized as a sialic acid containing glycoprotein which is subsequently desialylated prior to its proteolytic processing. Post-translationally, proapolipoprotein C-II, the major form found in plasma undergoes proteolytic cleavage of its N-terminal hexapeptide to generate apolipoprotein C-II, which occurs as the minor form in plasma. In terms of tissue distribution, liver.

The protein resides in the secreted. In terms of biological role, component of chylomicrons, very low-density lipoproteins (VLDL), low-density lipoproteins (LDL), and high-density lipoproteins (HDL) in plasma. Plays an important role in lipoprotein metabolism as an activator of lipoprotein lipase. Both proapolipoprotein C-II and apolipoprotein C-II can activate lipoprotein lipase. The polypeptide is Apolipoprotein C-II (APOC2) (Cavia porcellus (Guinea pig)).